We begin with the raw amino-acid sequence, 881 residues long: Alanine--tRNA ligase (881 aa).

Zn(2+)-binding residues include H568, H572, C670, and H674.

This sequence belongs to the class-II aminoacyl-tRNA synthetase family. Requires Zn(2+) as cofactor.

Its subcellular location is the cytoplasm. It catalyses the reaction tRNA(Ala) + L-alanine + ATP = L-alanyl-tRNA(Ala) + AMP + diphosphate. Functionally, catalyzes the attachment of alanine to tRNA(Ala) in a two-step reaction: alanine is first activated by ATP to form Ala-AMP and then transferred to the acceptor end of tRNA(Ala). Also edits incorrectly charged Ser-tRNA(Ala) and Gly-tRNA(Ala) via its editing domain. The sequence is that of Alanine--tRNA ligase from Clostridium acetobutylicum (strain ATCC 824 / DSM 792 / JCM 1419 / IAM 19013 / LMG 5710 / NBRC 13948 / NRRL B-527 / VKM B-1787 / 2291 / W).